The chain runs to 687 residues: DNA-directed RNA polymerase subunit beta' (687 aa).

Positions 69, 71, 87, and 90 each coordinate Zn(2+). Residues Asp-495, Asp-497, and Asp-499 each contribute to the Mg(2+) site.

The protein belongs to the RNA polymerase beta' chain family. RpoC1 subfamily. In plastids the minimal PEP RNA polymerase catalytic core is composed of four subunits: alpha, beta, beta', and beta''. When a (nuclear-encoded) sigma factor is associated with the core the holoenzyme is formed, which can initiate transcription. Mg(2+) serves as cofactor. The cofactor is Zn(2+).

Its subcellular location is the plastid. It is found in the chloroplast. The catalysed reaction is RNA(n) + a ribonucleoside 5'-triphosphate = RNA(n+1) + diphosphate. In terms of biological role, DNA-dependent RNA polymerase catalyzes the transcription of DNA into RNA using the four ribonucleoside triphosphates as substrates. The polypeptide is DNA-directed RNA polymerase subunit beta' (Solanum tuberosum (Potato)).